A 256-amino-acid chain; its full sequence is Uridylate kinase (256 aa).

Residue 10 to 13 coordinates ATP; that stretch reads KLSG. Gly-52 is a UMP binding site. ATP is bound by residues Gly-53 and Arg-57. Residues Asp-72 and 134–141 each bind UMP; that span reads NGQPFLTT. Residues Tyr-168 and Asp-171 each coordinate ATP.

Belongs to the UMP kinase family. As to quaternary structure, homohexamer.

The protein resides in the cytoplasm. It catalyses the reaction UMP + ATP = UDP + ADP. The protein operates within pyrimidine metabolism; CTP biosynthesis via de novo pathway; UDP from UMP (UMPK route): step 1/1. With respect to regulation, inhibited by UTP. Functionally, catalyzes the reversible phosphorylation of UMP to UDP. The sequence is that of Uridylate kinase from Frankia alni (strain DSM 45986 / CECT 9034 / ACN14a).